The primary structure comprises 403 residues: Tyrosine--tRNA ligase (403 aa).

Residues 42-51 carry the 'HIGH' region motif; that stretch reads PTAPDLHLGH. Positions 226–230 match the 'KMSKS' region motif; sequence KMSKS. Lys229 is a binding site for ATP. Positions 339 to 400 constitute an S4 RNA-binding domain; it reads LRLAGLLTAA…GKRNFARVLL (62 aa).

The protein belongs to the class-I aminoacyl-tRNA synthetase family. TyrS type 2 subfamily. Homodimer.

The protein localises to the cytoplasm. The catalysed reaction is tRNA(Tyr) + L-tyrosine + ATP = L-tyrosyl-tRNA(Tyr) + AMP + diphosphate + H(+). Functionally, catalyzes the attachment of tyrosine to tRNA(Tyr) in a two-step reaction: tyrosine is first activated by ATP to form Tyr-AMP and then transferred to the acceptor end of tRNA(Tyr). The chain is Tyrosine--tRNA ligase from Xanthomonas euvesicatoria pv. vesicatoria (strain 85-10) (Xanthomonas campestris pv. vesicatoria).